The following is a 1775-amino-acid chain: Protein TIC 214 (1775 aa).

6 consecutive transmembrane segments (helical) span residues 19 to 39 (IINS…FSIG), 68 to 88 (FIAG…HLAL), 91 to 111 (PHTI…WNNH), 133 to 153 (VFLN…SSML), 176 to 196 (VGWL…LVWI), and 227 to 247 (IFSI…PSPI). A disordered region spans residues 1491-1512 (KESAGQGERESDNEKKKNLESA).

This sequence belongs to the TIC214 family. As to quaternary structure, part of the Tic complex.

It localises to the plastid. Its subcellular location is the chloroplast inner membrane. Functionally, involved in protein precursor import into chloroplasts. May be part of an intermediate translocation complex acting as a protein-conducting channel at the inner envelope. The chain is Protein TIC 214 from Lobularia maritima (Sweet alyssum).